A 448-amino-acid polypeptide reads, in one-letter code: tRNA-2-methylthio-N(6)-dimethylallyladenosine synthase (448 aa).

Residues 7-123 (RSFYIHTFGC…LPALIGDAEE (117 aa)) enclose the MTTase N-terminal domain. [4Fe-4S] cluster-binding residues include Cys-16, Cys-52, Cys-86, Cys-159, Cys-163, and Cys-166. In terms of domain architecture, Radical SAM core spans 145–375 (REVGVGAFVP…IDLQLSISAE (231 aa)). A TRAM domain is found at 378 to 441 (QEAVGSVVDV…SATLTGVNQG (64 aa)).

This sequence belongs to the methylthiotransferase family. MiaB subfamily. Monomer. Requires [4Fe-4S] cluster as cofactor.

The protein resides in the cytoplasm. The catalysed reaction is N(6)-dimethylallyladenosine(37) in tRNA + (sulfur carrier)-SH + AH2 + 2 S-adenosyl-L-methionine = 2-methylsulfanyl-N(6)-dimethylallyladenosine(37) in tRNA + (sulfur carrier)-H + 5'-deoxyadenosine + L-methionine + A + S-adenosyl-L-homocysteine + 2 H(+). Functionally, catalyzes the methylthiolation of N6-(dimethylallyl)adenosine (i(6)A), leading to the formation of 2-methylthio-N6-(dimethylallyl)adenosine (ms(2)i(6)A) at position 37 in tRNAs that read codons beginning with uridine. The sequence is that of tRNA-2-methylthio-N(6)-dimethylallyladenosine synthase from Chlorobium phaeovibrioides (strain DSM 265 / 1930) (Prosthecochloris vibrioformis (strain DSM 265)).